Consider the following 316-residue polypeptide: Pyridoxal 5'-phosphate synthase subunit PdxS (316 aa).

A D-ribose 5-phosphate-binding site is contributed by aspartate 44. Catalysis depends on lysine 101, which acts as the Schiff-base intermediate with D-ribose 5-phosphate. A D-ribose 5-phosphate-binding site is contributed by glycine 173. Residue lysine 185 coordinates D-glyceraldehyde 3-phosphate. D-ribose 5-phosphate-binding positions include glycine 234 and 255-256 (GS).

The protein belongs to the PdxS/SNZ family. As to quaternary structure, in the presence of PdxT, forms a dodecamer of heterodimers.

The enzyme catalyses aldehydo-D-ribose 5-phosphate + D-glyceraldehyde 3-phosphate + L-glutamine = pyridoxal 5'-phosphate + L-glutamate + phosphate + 3 H2O + H(+). It participates in cofactor biosynthesis; pyridoxal 5'-phosphate biosynthesis. In terms of biological role, catalyzes the formation of pyridoxal 5'-phosphate from ribose 5-phosphate (RBP), glyceraldehyde 3-phosphate (G3P) and ammonia. The ammonia is provided by the PdxT subunit. Can also use ribulose 5-phosphate and dihydroxyacetone phosphate as substrates, resulting from enzyme-catalyzed isomerization of RBP and G3P, respectively. The sequence is that of Pyridoxal 5'-phosphate synthase subunit PdxS from Sulfurisphaera tokodaii (strain DSM 16993 / JCM 10545 / NBRC 100140 / 7) (Sulfolobus tokodaii).